A 175-amino-acid polypeptide reads, in one-letter code: Peptide methionine sulfoxide reductase MsrA (175 aa).

Cysteine 10 is a catalytic residue.

Belongs to the MsrA Met sulfoxide reductase family.

The catalysed reaction is L-methionyl-[protein] + [thioredoxin]-disulfide + H2O = L-methionyl-(S)-S-oxide-[protein] + [thioredoxin]-dithiol. The enzyme catalyses [thioredoxin]-disulfide + L-methionine + H2O = L-methionine (S)-S-oxide + [thioredoxin]-dithiol. In terms of biological role, has an important function as a repair enzyme for proteins that have been inactivated by oxidation. Catalyzes the reversible oxidation-reduction of methionine sulfoxide in proteins to methionine. This Clavibacter sepedonicus (Clavibacter michiganensis subsp. sepedonicus) protein is Peptide methionine sulfoxide reductase MsrA.